Reading from the N-terminus, the 39-residue chain is Cytochrome b559 subunit beta (39 aa).

A helical transmembrane segment spans residues 14 to 30; the sequence is WLAVHGLAVPTVFFLGA. Residue His-18 coordinates heme.

It belongs to the PsbE/PsbF family. In terms of assembly, heterodimer of an alpha subunit and a beta subunit. PSII is composed of 1 copy each of membrane proteins PsbA, PsbB, PsbC, PsbD, PsbE, PsbF, PsbH, PsbI, PsbJ, PsbK, PsbL, PsbM, PsbT, PsbX, PsbY, PsbZ, Psb30/Ycf12, at least 3 peripheral proteins of the oxygen-evolving complex and a large number of cofactors. It forms dimeric complexes. The cofactor is heme b.

The protein localises to the plastid. The protein resides in the chloroplast thylakoid membrane. Its function is as follows. This b-type cytochrome is tightly associated with the reaction center of photosystem II (PSII). PSII is a light-driven water:plastoquinone oxidoreductase that uses light energy to abstract electrons from H(2)O, generating O(2) and a proton gradient subsequently used for ATP formation. It consists of a core antenna complex that captures photons, and an electron transfer chain that converts photonic excitation into a charge separation. The chain is Cytochrome b559 subunit beta from Physcomitrium patens (Spreading-leaved earth moss).